A 356-amino-acid polypeptide reads, in one-letter code: Butyrate kinase (356 aa).

The protein belongs to the acetokinase family.

It is found in the cytoplasm. It carries out the reaction butanoate + ATP = butanoyl phosphate + ADP. Its pathway is lipid metabolism; butanoate metabolism. Functionally, catalyzes the conversion of butyryl-CoA through butyryl phosphate to butyrate. This chain is Butyrate kinase, found in Clostridium tetani (strain Massachusetts / E88).